An 835-amino-acid chain; its full sequence is Leucine--tRNA ligase (835 aa).

The short motif at 36–46 (PYPSGKIHVGH) is the 'HIGH' region element. The 'KMSKS' region motif lies at 602–606 (KMSKS). ATP is bound at residue lysine 605.

The protein belongs to the class-I aminoacyl-tRNA synthetase family.

Its subcellular location is the cytoplasm. The catalysed reaction is tRNA(Leu) + L-leucine + ATP = L-leucyl-tRNA(Leu) + AMP + diphosphate. This chain is Leucine--tRNA ligase, found in Rickettsia conorii (strain ATCC VR-613 / Malish 7).